The primary structure comprises 172 residues: Large ribosomal subunit protein uL10 (172 aa).

The protein belongs to the universal ribosomal protein uL10 family. In terms of assembly, part of the ribosomal stalk of the 50S ribosomal subunit. The N-terminus interacts with L11 and the large rRNA to form the base of the stalk. The C-terminus forms an elongated spine to which L12 dimers bind in a sequential fashion forming a multimeric L10(L12)X complex.

Functionally, forms part of the ribosomal stalk, playing a central role in the interaction of the ribosome with GTP-bound translation factors. This is Large ribosomal subunit protein uL10 from Brucella suis biovar 1 (strain 1330).